A 102-amino-acid polypeptide reads, in one-letter code: NADH-quinone oxidoreductase subunit K (102 aa).

3 helical membrane passes run 5–25 (LEHY…GIFL), 31–51 (IVIL…LVAF), and 66–86 (FVLT…VVFF).

It belongs to the complex I subunit 4L family. In terms of assembly, NDH-1 is composed of 14 different subunits. Subunits NuoA, H, J, K, L, M, N constitute the membrane sector of the complex.

The protein localises to the cell inner membrane. The catalysed reaction is a quinone + NADH + 5 H(+)(in) = a quinol + NAD(+) + 4 H(+)(out). In terms of biological role, NDH-1 shuttles electrons from NADH, via FMN and iron-sulfur (Fe-S) centers, to quinones in the respiratory chain. The immediate electron acceptor for the enzyme in this species is believed to be ubiquinone. Couples the redox reaction to proton translocation (for every two electrons transferred, four hydrogen ions are translocated across the cytoplasmic membrane), and thus conserves the redox energy in a proton gradient. The polypeptide is NADH-quinone oxidoreductase subunit K (Parvibaculum lavamentivorans (strain DS-1 / DSM 13023 / NCIMB 13966)).